The primary structure comprises 318 residues: GTP 3',8-cyclase (318 aa).

The region spanning 5–217 (KFERKIDYIR…DKIAKKYKFK (213 aa)) is the Radical SAM core domain. GTP is bound at residue Arg-14. Cys-21 and Cys-25 together coordinate [4Fe-4S] cluster. Tyr-27 provides a ligand contact to S-adenosyl-L-methionine. Residue Cys-28 coordinates [4Fe-4S] cluster. GTP is bound at residue Arg-64. Gly-68 is a binding site for S-adenosyl-L-methionine. Thr-95 serves as a coordination point for GTP. Ser-119 is a binding site for S-adenosyl-L-methionine. Lys-155 serves as a coordination point for GTP. Met-189 contributes to the S-adenosyl-L-methionine binding site. Positions 248 and 251 each coordinate [4Fe-4S] cluster. 253-255 (RIR) contributes to the GTP binding site. Residue Cys-265 participates in [4Fe-4S] cluster binding.

Belongs to the radical SAM superfamily. MoaA family. In terms of assembly, monomer and homodimer. Requires [4Fe-4S] cluster as cofactor.

It catalyses the reaction GTP + AH2 + S-adenosyl-L-methionine = (8S)-3',8-cyclo-7,8-dihydroguanosine 5'-triphosphate + 5'-deoxyadenosine + L-methionine + A + H(+). It functions in the pathway cofactor biosynthesis; molybdopterin biosynthesis. Its function is as follows. Catalyzes the cyclization of GTP to (8S)-3',8-cyclo-7,8-dihydroguanosine 5'-triphosphate. The protein is GTP 3',8-cyclase of Nautilia profundicola (strain ATCC BAA-1463 / DSM 18972 / AmH).